We begin with the raw amino-acid sequence, 150 residues long: Globin-2 (150 aa).

The Globin domain occupies 11–150 (PLSDAEKNKI…MICILLSSAY (140 aa)). The heme b site is built by histidine 74 and histidine 106.

The protein belongs to the globin family. Monomer.

This is Globin-2 from Mordacia mordax (Southern hemisphere lamprey).